The chain runs to 696 residues: Glutamate-rich protein 6B (696 aa).

Over residues 1-10 (MSAENNQLSG) the composition is skewed to polar residues. Residues 1-105 (MSAENNQLSG…EYLEKAGYLE (105 aa)) form a disordered region. Acidic residues-rich tracts occupy residues 32 to 44 (EDTEVELDEESLQ) and 54 to 72 (ESLEDKEYLEEEEDLEEEE). Residues 73–91 (YLGKEEYLKEEEYLGKEEH) show a composition bias toward basic and acidic residues.

This sequence belongs to the ERICH6 family.

The chain is Glutamate-rich protein 6B (ERICH6B) from Homo sapiens (Human).